The primary structure comprises 238 residues: Phosphoribosylaminoimidazole-succinocarboxamide synthase (238 aa).

Belongs to the SAICAR synthetase family.

It carries out the reaction 5-amino-1-(5-phospho-D-ribosyl)imidazole-4-carboxylate + L-aspartate + ATP = (2S)-2-[5-amino-1-(5-phospho-beta-D-ribosyl)imidazole-4-carboxamido]succinate + ADP + phosphate + 2 H(+). The protein operates within purine metabolism; IMP biosynthesis via de novo pathway; 5-amino-1-(5-phospho-D-ribosyl)imidazole-4-carboxamide from 5-amino-1-(5-phospho-D-ribosyl)imidazole-4-carboxylate: step 1/2. The sequence is that of Phosphoribosylaminoimidazole-succinocarboxamide synthase from Marinomonas sp. (strain MWYL1).